We begin with the raw amino-acid sequence, 164 residues long: Cilia- and flagella-associated protein 20 (164 aa).

Belongs to the CFAP20 family. As to quaternary structure, microtubule inner protein component of sperm flagellar doublet microtubules.

Its subcellular location is the nucleus. It is found in the cytoplasm. The protein localises to the cytoskeleton. It localises to the microtubule organizing center. The protein resides in the centrosome. Its subcellular location is the centriole. It is found in the cilium basal body. The protein localises to the cilium axoneme. It localises to the flagellum axoneme. Its function is as follows. Cilium- and flagellum-specific protein that plays a role in axonemal structure organization and motility. Microtubule inner protein (MIP) part of the dynein-decorated doublet microtubules (DMTs) in cilia axoneme, which is required for motile cilia beating. Involved in the regulation of the size and morphology of cilia. Required for axonemal microtubules polyglutamylation. The protein is Cilia- and flagella-associated protein 20 (Cfap20) of Rattus norvegicus (Rat).